The chain runs to 711 residues: Hepatocyte growth factor-like protein (711 aa).

An N-terminal signal peptide occupies residues 1–18 (MGWLPLLLLLTQCLGVPG). The 85-residue stretch at 21 to 105 (SPLNDFQVLR…GRCDLFQKKD (85 aa)) folds into the PAN domain. 20 disulfides stabilise this stretch: Cys56–Cys78, Cys60–Cys66, Cys110–Cys186, Cys131–Cys169, Cys157–Cys181, Cys191–Cys268, Cys194–Cys324, Cys212–Cys251, Cys240–Cys263, Cys283–Cys361, Cys304–Cys343, Cys332–Cys355, Cys370–Cys448, Cys391–Cys431, Cys419–Cys443, Cys468–Cys588, Cys507–Cys523, Cys602–Cys667, Cys632–Cys646, and Cys657–Cys685. Asn72 carries N-linked (GlcNAc...) asparagine glycosylation. Kringle domains lie at 110 to 186 (CIMN…IKSC), 191 to 268 (CVWC…LPRC), 283 to 361 (CFRG…IRRC), and 370 to 448 (CYHG…LRRC). N-linked (GlcNAc...) asparagine glycosylation occurs at Asn296. One can recognise a Peptidase S1 domain in the interval 484–709 (VVGGHPGNSP…FVDWIHKVMR (226 aa)). N-linked (GlcNAc...) asparagine glycosylation is present at Asn615.

It belongs to the peptidase S1 family. Plasminogen subfamily. Dimer of an alpha chain and a beta chain linked by a disulfide bond. Interacts (via beta chain) with MST1R (via SEMA domain). Cleaved after Arg-483, probably by HPN/Hepsin, to yield the active form consisting of two disulfide-linked chains.

It is found in the secreted. In Homo sapiens (Human), this protein is Hepatocyte growth factor-like protein (MST1).